We begin with the raw amino-acid sequence, 383 residues long: Galactokinase (383 aa).

34-37 serves as a coordination point for substrate; it reads EHTD. 124–130 lines the ATP pocket; sequence GAGLSSS. Residues S130 and E162 each contribute to the Mg(2+) site. Catalysis depends on D174, which acts as the Proton acceptor. Y223 is a substrate binding site.

Belongs to the GHMP kinase family. GalK subfamily.

It localises to the cytoplasm. It catalyses the reaction alpha-D-galactose + ATP = alpha-D-galactose 1-phosphate + ADP + H(+). It functions in the pathway carbohydrate metabolism; galactose metabolism. Functionally, catalyzes the transfer of the gamma-phosphate of ATP to D-galactose to form alpha-D-galactose-1-phosphate (Gal-1-P). This chain is Galactokinase, found in Serratia proteamaculans (strain 568).